A 104-amino-acid polypeptide reads, in one-letter code: NADH-quinone oxidoreductase subunit K (104 aa).

Helical transmembrane passes span 4-24, 31-51, and 67-87; these read VPASAYLTLAIILFCIGLFGA, VIVLVCIELMLNAANLNFVAF, and LFTMAVAAAEAAVGLAILIAL.

This sequence belongs to the complex I subunit 4L family. NDH-1 is composed of 14 different subunits. Subunits NuoA, H, J, K, L, M, N constitute the membrane sector of the complex.

The protein localises to the cell membrane. It catalyses the reaction a quinone + NADH + 5 H(+)(in) = a quinol + NAD(+) + 4 H(+)(out). In terms of biological role, NDH-1 shuttles electrons from NADH, via FMN and iron-sulfur (Fe-S) centers, to quinones in the respiratory chain. The immediate electron acceptor for the enzyme in this species is believed to be a menaquinone. Couples the redox reaction to proton translocation (for every two electrons transferred, four hydrogen ions are translocated across the cytoplasmic membrane), and thus conserves the redox energy in a proton gradient. This chain is NADH-quinone oxidoreductase subunit K, found in Bacillus anthracis (strain A0248).